The following is a 203-amino-acid chain: MFEGPVQDLIDELGKLPGIGPKSAQRIAFHLLSVEPSDIDRLTGVLAKVRDGVRFCAVCGNVSDNERCRICSDIRRDASVVCIVEEPKDIQAVERTREFRGRYHVLGGALDPLSGIGPDQLRIRELLSRIGERVDDVDVTEVIIATDPNTEGEATATYLVRMLRDIPGLTVTRIASGLPMGGDLEFADELTLGRALAGRRVLA.

A C4-type zinc finger spans residues 56-71 (CAVCGNVSDNERCRIC). In terms of domain architecture, Toprim spans 79 to 179 (SVVCIVEEPK…TVTRIASGLP (101 aa)).

It belongs to the RecR family.

In terms of biological role, may play a role in DNA repair. It seems to be involved in an RecBC-independent recombinational process of DNA repair. It may act with RecF and RecO. In Mycobacterium bovis (strain ATCC BAA-935 / AF2122/97), this protein is Recombination protein RecR.